The following is a 69-amino-acid chain: Peptide Hact-1 (69 aa).

Residues 1–21 (MDRKFHLCLLLVILGTIIVQG) form the signal peptide. Positions 22 to 57 (APLENENDADPDKPQKYRYYLKRATTEKKDNDPAKP) are excised as a propeptide. A disulfide bond links Cys-59 and Cys-68.

In terms of tissue distribution, tentacle (ecto and/or endoderm tissue), and possibly also nematoblasts.

Its subcellular location is the secreted. It is found in the nematocyst. Peptide with unknown function. Has a limited effect on human peripheral blood mononuclear cells. Does not show activity against both Gram-positive and Gram-negative bacteria nor is it active on the 26 voltage-gated ion channels tested. This is Peptide Hact-1 from Heliofungia actiniformis (Mushroom coral).